A 145-amino-acid chain; its full sequence is Glutaconyl-CoA decarboxylase subunit gamma (145 aa).

The tract at residues 52-82 (APAPAAAPAAAPAPAAKPAAAAPAGSVTVSA) is disordered. The span at 57-75 (AAPAAAPAPAAKPAAAAPA) shows a compositional bias: low complexity. The Biotinyl-binding domain maps to 77–145 (SVTVSAPMPG…VATGDVMVIL (69 aa)). K112 is subject to N6-biotinyllysine.

Heterooctamer consisting of two alpha, two beta, two gamma and two delta subunits. The cofactor is biotin.

The enzyme catalyses (2E)-glutaconyl-CoA + Na(+)(in) + H(+) = (2E)-butenoyl-CoA + Na(+)(out) + CO2. Its pathway is amino-acid degradation; L-glutamate degradation via hydroxyglutarate pathway; crotonoyl-CoA from L-glutamate: step 5/5. In terms of biological role, biotin carrier subunit of the primary sodium pump glutaconyl-CoA decarboxylase (GCD). The sequence is that of Glutaconyl-CoA decarboxylase subunit gamma (gcdC) from Acidaminococcus fermentans (strain ATCC 25085 / DSM 20731 / CCUG 9996 / CIP 106432 / VR4).